Consider the following 121-residue polypeptide: Large ribosomal subunit protein uL24 (121 aa).

The protein belongs to the universal ribosomal protein uL24 family. In terms of assembly, part of the 50S ribosomal subunit.

In terms of biological role, one of two assembly initiator proteins, it binds directly to the 5'-end of the 23S rRNA, where it nucleates assembly of the 50S subunit. Functionally, located at the polypeptide exit tunnel on the outside of the subunit. In Pyrococcus abyssi (strain GE5 / Orsay), this protein is Large ribosomal subunit protein uL24.